We begin with the raw amino-acid sequence, 202 residues long: Small ribosomal subunit protein uS4 (202 aa).

The interval 22 to 43 (TRKSARRAYPPGQHGQNRRKRS) is disordered. The S4 RNA-binding domain occupies 90–152 (MRLDNTVFRL…EKSKEMVKTN (63 aa)).

This sequence belongs to the universal ribosomal protein uS4 family. In terms of assembly, part of the 30S ribosomal subunit. Contacts protein S5. The interaction surface between S4 and S5 is involved in control of translational fidelity.

In terms of biological role, one of the primary rRNA binding proteins, it binds directly to 16S rRNA where it nucleates assembly of the body of the 30S subunit. Functionally, with S5 and S12 plays an important role in translational accuracy. This is Small ribosomal subunit protein uS4 from Trichodesmium erythraeum (strain IMS101).